A 180-amino-acid chain; its full sequence is Large ribosomal subunit protein uL5 (180 aa).

The protein belongs to the universal ribosomal protein uL5 family. Part of the 50S ribosomal subunit; part of the 5S rRNA/L5/L18/L25 subcomplex. Contacts the 5S rRNA and the P site tRNA. Forms a bridge to the 30S subunit in the 70S ribosome.

Functionally, this is one of the proteins that bind and probably mediate the attachment of the 5S RNA into the large ribosomal subunit, where it forms part of the central protuberance. In the 70S ribosome it contacts protein S13 of the 30S subunit (bridge B1b), connecting the 2 subunits; this bridge is implicated in subunit movement. Contacts the P site tRNA; the 5S rRNA and some of its associated proteins might help stabilize positioning of ribosome-bound tRNAs. This Streptococcus pneumoniae (strain JJA) protein is Large ribosomal subunit protein uL5.